Here is a 53-residue protein sequence, read N- to C-terminus: uncharacterized protein (53 aa).

The helical transmembrane segment at 20-42 (ILFPVLLVFDTILIVVGIALILF) threads the bilayer.

The protein localises to the membrane. This is an uncharacterized protein from Archaeoglobus fulgidus (strain ATCC 49558 / DSM 4304 / JCM 9628 / NBRC 100126 / VC-16).